We begin with the raw amino-acid sequence, 155 residues long: Small ribosomal subunit protein uS7cz/uS7cy (155 aa).

It belongs to the universal ribosomal protein uS7 family. Part of the 30S ribosomal subunit.

Its subcellular location is the plastid. The protein resides in the chloroplast. Its function is as follows. One of the primary rRNA binding proteins, it binds directly to 16S rRNA where it nucleates assembly of the head domain of the 30S subunit. This is Small ribosomal subunit protein uS7cz/uS7cy (rps7-A) from Populus trichocarpa (Western balsam poplar).